A 477-amino-acid polypeptide reads, in one-letter code: Glycogen synthase (477 aa).

Residue Lys15 participates in ADP-alpha-D-glucose binding.

The protein belongs to the glycosyltransferase 1 family. Bacterial/plant glycogen synthase subfamily.

It catalyses the reaction [(1-&gt;4)-alpha-D-glucosyl](n) + ADP-alpha-D-glucose = [(1-&gt;4)-alpha-D-glucosyl](n+1) + ADP + H(+). It functions in the pathway glycan biosynthesis; glycogen biosynthesis. In terms of biological role, synthesizes alpha-1,4-glucan chains using ADP-glucose. In Streptococcus pneumoniae (strain ATCC 700669 / Spain 23F-1), this protein is Glycogen synthase.